The primary structure comprises 416 residues: Histidinol dehydrogenase (416 aa).

Residues Y117, Q178, and N201 each contribute to the NAD(+) site. Substrate-binding residues include T224, Q246, and H249. Zn(2+) is bound by residues Q246 and H249. Catalysis depends on proton acceptor residues E314 and H315. Substrate-binding residues include H315, D348, E402, and H407. Residue D348 coordinates Zn(2+). H407 contacts Zn(2+).

It belongs to the histidinol dehydrogenase family. It depends on Zn(2+) as a cofactor.

The catalysed reaction is L-histidinol + 2 NAD(+) + H2O = L-histidine + 2 NADH + 3 H(+). Its pathway is amino-acid biosynthesis; L-histidine biosynthesis; L-histidine from 5-phospho-alpha-D-ribose 1-diphosphate: step 9/9. Its function is as follows. Catalyzes the sequential NAD-dependent oxidations of L-histidinol to L-histidinaldehyde and then to L-histidine. In Staphylococcus aureus (strain Mu50 / ATCC 700699), this protein is Histidinol dehydrogenase.